The sequence spans 149 residues: MSEPQRPHVVIFTDGACSGNPGPGGWGAILRFGEIEKELKGGENPTTNNRMELLAAISALEALKRSAIVDLTTDSQYVRQGITSWIFNWKKNGWRTSDKKPVKNVDLWQRLDAALKPHEVRWHWIKGHAGHAENERADELAREGLAENR.

One can recognise an RNase H type-1 domain in the interval 5-146 (QRPHVVIFTD…ADELAREGLA (142 aa)). D14, E52, D74, and D138 together coordinate Mg(2+).

It belongs to the RNase H family. Monomer. Mg(2+) serves as cofactor.

It localises to the cytoplasm. It catalyses the reaction Endonucleolytic cleavage to 5'-phosphomonoester.. In terms of biological role, endonuclease that specifically degrades the RNA of RNA-DNA hybrids. In Afipia carboxidovorans (strain ATCC 49405 / DSM 1227 / KCTC 32145 / OM5) (Oligotropha carboxidovorans), this protein is Ribonuclease H.